Reading from the N-terminus, the 203-residue chain is Outer-membrane lipoprotein LolB (203 aa).

Positions 1 to 18 (MTLRSFLILLLSSIVLAG) are cleaved as a signal peptide. A lipid anchor (N-palmitoyl cysteine) is attached at Cys19. Residue Cys19 is the site of S-diacylglycerol cysteine attachment.

This sequence belongs to the LolB family. Monomer.

It localises to the cell outer membrane. Functionally, plays a critical role in the incorporation of lipoproteins in the outer membrane after they are released by the LolA protein. In Vibrio campbellii (strain ATCC BAA-1116), this protein is Outer-membrane lipoprotein LolB.